The primary structure comprises 517 residues: Nectin-1 (517 aa).

Positions 1–30 (MARMGLAGAAGRWWGLALGLTAFFLPGVHS) are cleaved as a signal peptide. Residues 31-141 (QVVQVNDSMY…GNRESQLNLT (111 aa)) enclose the Ig-like V-type domain. Residues 31–355 (QVVQVNDSMY…GRRAGPVPTA (325 aa)) lie on the Extracellular side of the membrane. N-linked (GlcNAc...) asparagine glycans are attached at residues Asn36, Asn72, and Asn139. A disulfide bridge links Cys51 with Cys124. 2 Ig-like C2-type domains span residues 149–238 (WIEG…FKES) and 247–334 (PEVT…VNIT). Disulfide bonds link Cys172-Cys226 and Cys269-Cys316. Residue Asn202 is glycosylated (N-linked (GlcNAc...) (complex) asparagine). The segment at 282–299 (WTTLNGSLPKGVEAQNRT) is interaction with FGFR. N-linked (GlcNAc...) asparagine glycans are attached at residues Asn286, Asn297, Asn307, and Asn332. The chain crosses the membrane as a helical span at residues 356-376 (IIGGVAGSILLVLIVVGGIVV). At 377-517 (ALRRRRHTFK…SFISKKEWYV (141 aa)) the chain is on the cytoplasmic side. A disordered region spans residues 399 to 488 (GYSKAGIPQH…DGYGDRTLGY (90 aa)). Ser422, Ser434, and Ser435 each carry phosphoserine. The residue at position 436 (Tyr436) is a Phosphotyrosine. Over residues 436-445 (YEEEEEEEEG) the composition is skewed to acidic residues. The span at 449-466 (GERKVGGPHPKYDEDAKR) shows a compositional bias: basic and acidic residues. A Phosphoserine modification is found at Ser511.

This sequence belongs to the nectin family. Cis- and trans-homodimer. Can form trans-heterodimers with NECTIN3 and with NECTIN4. Interaction between NECTIN1 and NECTIN3 on the pre- and postsynaptic sites, respectively, initiates the formation of puncta adherentia junctions between axons and dendrites. Interacts (via cytoplasmic domain) with AFDN (via PDZ domain); this interaction recruits NECTIN1 to cadherin-based adherens junctions and provides a connection with the actin cytoskeleton. Interacts with integrin alphaV/beta3. Interacts (via Ig-like C2-type domain 2) with FGFR1, FGFR2 and FGFR3. In terms of assembly, (Microbial infection) Interacts with herpes simplex virus 1/HHV-1, herpes simplex virus 2/HHV-2, and pseudorabies virus/PRV envelope glycoprotein D. Post-translationally, (Microbial infection) Ubiquitinated by CBL following infection by herpes simplex virus 1/HHV-1 and association with HHV-1 envelope glycoprotein D, leading to its removal from cell surface.

Its subcellular location is the cell membrane. It is found in the cell junction. The protein localises to the adherens junction. The protein resides in the presynaptic cell membrane. It localises to the secreted. Its function is as follows. Cell adhesion molecule that promotes cell-cell contacts and plays important roles in the development of the nervous system. Acts by forming homophilic or heterophilic trans-dimers. Heterophilic interactions have been detected between NECTIN1 and NECTIN3 and between NECTIN1 and NECTIN4. Involved in axon guidance by promoting contacts between the commissural axons and the floor plate cells. Involved in synaptogegesis. Has some neurite outgrowth-promoting activity. Promotes formation of checkerboard-like cellular pattern of hair cells and supporting cells in the auditory epithelium via heterophilic interaction with NECTIN3: NECTIN1 is present in the membrane of hair cells and associates with NECTIN3 on supporting cells, thereby mediating heterotypic adhesion between these two cell types. Required for enamel mineralization. Functionally, (Microbial infection) Acts as a receptor for herpes simplex virus 1/HHV-1, herpes simplex virus 2/HHV-2, and pseudorabies virus/PRV. Constitutes the major receptor for herpes simplex virus 1/HHV-1 entry into host cells. This Homo sapiens (Human) protein is Nectin-1.